Here is a 351-residue protein sequence, read N- to C-terminus: MAEEKQKKSVLEKALKRIEENFGKGSIMILGDETQVQPVEVIPTGSIAIDIATGVGGYPRGRIVEIFGPESSGKTTLALHAIAEAQKMGGVAAFIDAEHALDPVYAKNLGVDLKSLLISQPDHGEQALEIVDELVRSGVVDLIVVDSVAALVPRAEIEGAMGDMQVGLQARLMSQALRKIAGSVNKSKAVVIFTNQIRMKIGVMFGSPETTTGGLALKFYATMRLEVRRGEALKEGKDVIGNVVNVKIVKNKVAPPFKTAQTYIIYGKGIDREYELFHIGVDEGVITRKGSWYYYTTLKGEEVSLGQGGSNVVQFLKENPQIAEEIERRIKEKYGLLRQTEKEPEKADKSS.

68 to 75 (GPESSGKT) is a binding site for ATP.

The protein belongs to the RecA family.

Its subcellular location is the cytoplasm. In terms of biological role, can catalyze the hydrolysis of ATP in the presence of single-stranded DNA, the ATP-dependent uptake of single-stranded DNA by duplex DNA, and the ATP-dependent hybridization of homologous single-stranded DNAs. It interacts with LexA causing its activation and leading to its autocatalytic cleavage. This Thermotoga neapolitana (strain ATCC 49049 / DSM 4359 / NBRC 107923 / NS-E) protein is Protein RecA.